The following is a 252-amino-acid chain: MSLTGLPDIRKKIGQFHHLRIYKQILSLQGNFARLNYFLGDVFPANLRSASVSVFFEVRLGPRIPDCIVLLKSVDAKDEFAFHCYFFEFKTTLGKSTMQSVHHNCIHQAQYLQGLRQLQQSISFLDQYLIADEVSWNVVPVICFFRQWGLKLDFFKKFSGKTKRLSFSFIRDLFARSQDGAVQSLLSIPNYTNFRRACQKHTDLYRKRCRKAPKSVLTKTSGENRSRASRQVAKNAPKNRIRRTAKKDAKRQ.

The disordered stretch occupies residues Ser-215–Gln-252. The segment covering Pro-237–Gln-252 has biased composition (basic residues).

Belongs to the herpesviridae UL24 family.

It localises to the virion. The protein resides in the host cytoplasm. It is found in the host nucleus. The protein localises to the host nucleolus. Its subcellular location is the host Golgi apparatus. Its function is as follows. May participate in nuclear egress of viral particles. Plays a role in the dispersal of several host nucleolar proteins including NCL/nucleolin and NPM1. Since deletion of host NCL/nucleolin negatively impact on nuclear egress, UL24 supposedly acts on this process through its effect on host nucleoli. This chain is Protein UL24 homolog (U49), found in Homo sapiens (Human).